A 376-amino-acid polypeptide reads, in one-letter code: Putative C-mannosyltransferase DPY19L2P2 (376 aa).

An N-linked (GlcNAc...) asparagine glycan is attached at Asn32. Transmembrane regions (helical) follow at residues 52–72 (ACFYVGVIFILNGLMMGLFFI), 107–127 (LRESFSYPFLVLQMYVLTLIL), 154–174 (AQFILFTQIASLFPMYVVGYI), 182–202 (IIYMNMISVTLSFILMFGNSM), 233–253 (LNCWLIQGSAWWCGTIILKFL), and 299–319 (LLIYTKTLLLPVVMVITCFIF).

This sequence belongs to the dpy-19 family. As to expression, fibroblast, lung, lymphoblast, spleen and testis.

Its subcellular location is the membrane. Functionally, probable C-mannosyltransferase that mediates C-mannosylation of tryptophan residues on target proteins. This chain is Putative C-mannosyltransferase DPY19L2P2 (DPY19L2P2), found in Homo sapiens (Human).